The chain runs to 331 residues: Protein RecA (331 aa).

66-73 (GPESSGKT) contributes to the ATP binding site.

This sequence belongs to the RecA family.

The protein localises to the cytoplasm. Its function is as follows. Can catalyze the hydrolysis of ATP in the presence of single-stranded DNA, the ATP-dependent uptake of single-stranded DNA by duplex DNA, and the ATP-dependent hybridization of homologous single-stranded DNAs. It interacts with LexA causing its activation and leading to its autocatalytic cleavage. The chain is Protein RecA from Acholeplasma laidlawii (strain PG-8A).